A 649-amino-acid chain; its full sequence is MSEKVIDVQDAWRERALIDDAKYKEMYAASVSDPETFWAEHGRRIDWSTPFSKVKNTSFAPGNVSIKWFEDGKTNVALNCIDRHLETRGDQTAIIWEGDDPNESQHITYKQLHAEVCRMANVLRNRGVGKGDRVTLYLPMIPEAAYAMLACARLGAIHAIVFGGFSPDSLASRIKGCGSKLVITADEGLRGGRKVPLKANVDEAIKRLDADLVDHVIVVKRTGGNVAMEPGRDVYYHEAAEQVTDECPAEAVEAEHPLFILYTSGSTGQPKGVVHTTGGYLVYASMTHQYVFDYHDGDVYWCTADVGWVTGHSYIVYGPLANGATTLMFEGIPTYPSNSRFWEVIDKHKVNIFYTAPTAIRSLMGGGEGPVKKTSRASLRVLGSVGEPINPEAWDWYYRVVGDSRCSIVDTWWQTETGGILITPLPGATKLKPGSATRPFFGVQPVMVDAEGKELDGACEGNLCIKDSWPGQMRTVYGDHERFEQTYFSTYKNLYFTGDGARRDADGYYWITGRVDDVINVSGHRMGTAEVESSLVAHPKVSEAAVVGYPHNVKGQGIYAYVTLNEGEDGSDELRKELVTWVRKDIGPIASPDLIQFAPGLPKTRSGKIMRRILRKIAEDDFGSLGDTSTLAEPAVVDDLIENRQNRSA.

CoA is bound by residues 190 to 193 (RGGR) and Thr310. Residues 386 to 388 (GEP), 410 to 415 (DTWWQT), Asp499, and Arg514 contribute to the ATP site. Ser522 is a CoA binding site. An ATP-binding site is contributed by Arg525. Mg(2+) is bound by residues Val536, His538, and Val541. Residue Arg583 coordinates CoA. Lys608 is subject to N6-acetyllysine.

The protein belongs to the ATP-dependent AMP-binding enzyme family. It depends on Mg(2+) as a cofactor. Acetylated. Deacetylation by the SIR2-homolog deacetylase activates the enzyme.

The enzyme catalyses acetate + ATP + CoA = acetyl-CoA + AMP + diphosphate. In terms of biological role, catalyzes the conversion of acetate into acetyl-CoA (AcCoA), an essential intermediate at the junction of anabolic and catabolic pathways. AcsA undergoes a two-step reaction. In the first half reaction, AcsA combines acetate with ATP to form acetyl-adenylate (AcAMP) intermediate. In the second half reaction, it can then transfer the acetyl group from AcAMP to the sulfhydryl group of CoA, forming the product AcCoA. This chain is Acetyl-coenzyme A synthetase, found in Methylorubrum populi (strain ATCC BAA-705 / NCIMB 13946 / BJ001) (Methylobacterium populi).